The primary structure comprises 217 residues: 3,4-dihydroxy-2-butanone 4-phosphate synthase (217 aa).

D-ribulose 5-phosphate is bound by residues 37–38 (RE), D42, 150–154 (RRGHT), and E174. E38 provides a ligand contact to Mg(2+). H153 is a binding site for Mg(2+).

This sequence belongs to the DHBP synthase family. In terms of assembly, homodimer. Mg(2+) serves as cofactor. The cofactor is Mn(2+).

The enzyme catalyses D-ribulose 5-phosphate = (2S)-2-hydroxy-3-oxobutyl phosphate + formate + H(+). The protein operates within cofactor biosynthesis; riboflavin biosynthesis; 2-hydroxy-3-oxobutyl phosphate from D-ribulose 5-phosphate: step 1/1. Its function is as follows. Catalyzes the conversion of D-ribulose 5-phosphate to formate and 3,4-dihydroxy-2-butanone 4-phosphate. This Serratia proteamaculans (strain 568) protein is 3,4-dihydroxy-2-butanone 4-phosphate synthase.